The following is a 502-amino-acid chain: 4,4'-diapophytoene desaturase (4,4'-diaponeurosporene-forming) (502 aa).

5-17 serves as a coordination point for FAD; it reads VIGAGVTGLAAAA.

It belongs to the carotenoid/retinoid oxidoreductase family. CrtN subfamily.

It catalyses the reaction 15-cis-4,4'-diapophytoene + 3 FAD + 3 H(+) = all-trans-4,4'-diaponeurosporene + 3 FADH2. It functions in the pathway carotenoid biosynthesis; staphyloxanthin biosynthesis; staphyloxanthin from farnesyl diphosphate: step 2/5. In terms of biological role, involved in the biosynthesis of the yellow-orange carotenoid staphyloxanthin, which plays a role in the virulence via its protective function against oxidative stress. Catalyzes three successive dehydrogenation reactions that lead to the introduction of three double bonds into 4,4'-diapophytoene (dehydrosqualene), with 4,4'-diapophytofluene and 4,4'-diapo-zeta-carotene as intermediates, and 4,4'-diaponeurosporene (the major deep-yellow pigment in staphylococci strains) as the end product. This is 4,4'-diapophytoene desaturase (4,4'-diaponeurosporene-forming) from Staphylococcus aureus (strain MRSA252).